The following is a 446-amino-acid chain: Probable D-serine dehydratase (446 aa).

Lys-118 bears the N6-(pyridoxal phosphate)lysine mark.

The protein belongs to the serine/threonine dehydratase family. DsdA subfamily. The cofactor is pyridoxal 5'-phosphate.

The enzyme catalyses D-serine = pyruvate + NH4(+). The protein is Probable D-serine dehydratase of Ectopseudomonas mendocina (strain ymp) (Pseudomonas mendocina).